The sequence spans 808 residues: Sucrose synthase 4 (808 aa).

The tract at residues 277–754 (MVFNVVILSP…GLERIQEKYT (478 aa)) is GT-B glycosyltransferase.

The protein belongs to the glycosyltransferase 1 family. Plant sucrose synthase subfamily. Detected in the whole plant with highest expression in young rosette leaves and roots.

The catalysed reaction is an NDP-alpha-D-glucose + D-fructose = a ribonucleoside 5'-diphosphate + sucrose + H(+). In terms of biological role, sucrose-cleaving enzyme that provides UDP-glucose and fructose for various metabolic pathways. The protein is Sucrose synthase 4 (SUS4) of Arabidopsis thaliana (Mouse-ear cress).